A 354-amino-acid polypeptide reads, in one-letter code: MVGAVIDLFCGVGGLTHGLILEGFGVLAGIDNDPSCKYAYEQNNRTRFIEKSISEVDGRELNALYPNNQHKILVGCAPCQDFSQYTKKSRTGTKWQLLTEFSRLIREIEPDIISMENVPEVRTFNRGEVFNNFIQSLEQLGYHVSHSVVHCPDYGIPQQRDRLVLFAAKQGVIKIIPPTHTPENYRTVRDVIGSLATNYSGGHWEGDSMHAASRLEDINLRRIQHSVPGGTWADWPEELIAECHKKESGESYGSVYGRMEWDKVAPTITTQCNGYGNGRFGHPEQDRAISLREAALLQTFPRSYQFAPEGQLKFKTVSRQIGNAVPVALGRVIAKSIKRFLEGLHERQRVRIII.

The region spanning 3-344 is the SAM-dependent MTase C5-type domain; sequence GAVIDLFCGV…KSIKRFLEGL (342 aa). Cysteine 79 is a catalytic residue.

The protein belongs to the class I-like SAM-binding methyltransferase superfamily. C5-methyltransferase family.

The catalysed reaction is a 2'-deoxycytidine in DNA + S-adenosyl-L-methionine = a 5-methyl-2'-deoxycytidine in DNA + S-adenosyl-L-homocysteine + H(+). A methylase that recognizes the double-stranded sequence 5'-GTCGAC-3', methylates C-? on both strands and protects the DNA from cleavage by the HgiDII endonuclease. This Herpetosiphon aurantiacus (Herpetosiphon giganteus) protein is Type II methylase M.HgiDII.